The following is a 192-amino-acid chain: Late embryogenesis abundant protein 47 (192 aa).

Positions 5–9 (QLQKP) match the Nuclear localization signal (NLS) motif. SMP domains lie at 68-125 (ITIG…LNAR) and 133-190 (TTLA…RINQ). A disordered region spans residues 146–174 (LPSDKAATRKDAEGVTGAEMRNDPHLTTY). Residues 147-158 (PSDKAATRKDAE) show a composition bias toward basic and acidic residues.

This sequence belongs to the LEA type SMP family.

The protein resides in the cytoplasm. The protein localises to the nucleus. Its function is as follows. LEA proteins are late embryonic proteins abundant in higher plant seed embryos. The function of those proteins is not known. This chain is Late embryogenesis abundant protein 47, found in Arabidopsis thaliana (Mouse-ear cress).